The sequence spans 170 residues: Peptide deformylase 1 (170 aa).

Residues Cys92 and His135 each coordinate Fe cation. Glu136 is a catalytic residue. A Fe cation-binding site is contributed by His139.

The protein belongs to the polypeptide deformylase family. It depends on Fe(2+) as a cofactor.

The enzyme catalyses N-terminal N-formyl-L-methionyl-[peptide] + H2O = N-terminal L-methionyl-[peptide] + formate. Removes the formyl group from the N-terminal Met of newly synthesized proteins. Requires at least a dipeptide for an efficient rate of reaction. N-terminal L-methionine is a prerequisite for activity but the enzyme has broad specificity at other positions. The sequence is that of Peptide deformylase 1 from Coxiella burnetii (strain RSA 493 / Nine Mile phase I).